The sequence spans 543 residues: Zinc finger protein 852 (543 aa).

The 75-residue stretch at 8-82 (VAYEDLSEDY…TSGGLFGVVP (75 aa)) folds into the KRAB domain. Position 145 is a phosphoserine (serine 145). 12 consecutive C2H2-type zinc fingers follow at residues 159-181 (YRCDECGKAFYWSSHLIGHRRIH), 187-209 (YECNECGKTFRQTSQLIVHLRTH), 215-237 (YECSECGKAYRHSSHLIQHQRLH), 243-265 (YKCNECAKAFNQSSKLFDHQRTH), 271-293 (YECKECGAAFSRSKNLVRHQFLH), 299-321 (YKCNECGRAFCSNRNLIDHQRTH), 327-349 (YKCNECGKAFSRSKCLIRHQSLH), 355-377 (YKCSECGKAFNQISQLVEHERIH), 383-405 (FKCSECGKAFGLSKCLIRHQRLH), 411-433 (YKCNECGKSFNQNSYLIIHQRIH), 439-461 (YECNECGKVFSYNSSLMVHQRTH), and 467-489 (YKCNSCGKAFSDSSQLTVHQRVH).

It belongs to the krueppel C2H2-type zinc-finger protein family.

It localises to the nucleus. In terms of biological role, may be involved in transcriptional regulation. This is Zinc finger protein 852 (ZNF852) from Homo sapiens (Human).